The primary structure comprises 273 residues: Probable membrane transporter protein YunE (273 aa).

8 helical membrane-spanning segments follow: residues 3–23 (FVIL…IGLG), 50–70 (AIGT…LAYI), 81–101 (LIFF…SKLF), 105–125 (SFSV…MLKA), 157–177 (VGIA…IGGG), 185–205 (MLLF…IIFL), 222–242 (WLYA…GAAI), and 251–271 (IVMI…YEGI).

Belongs to the 4-toluene sulfonate uptake permease (TSUP) (TC 2.A.102) family.

The protein localises to the cell membrane. This Bacillus subtilis (strain 168) protein is Probable membrane transporter protein YunE (yunE).